The following is a 124-amino-acid chain: Fluoride-specific ion channel FluC (124 aa).

4 helical membrane passes run Val-4–Leu-24, Phe-35–Ala-55, Ile-60–Ser-80, and Leu-100–Ile-120. Na(+) is bound by residues Gly-74 and Thr-77.

It belongs to the fluoride channel Fluc/FEX (TC 1.A.43) family.

It is found in the cell inner membrane. The enzyme catalyses fluoride(in) = fluoride(out). Its activity is regulated as follows. Na(+) is not transported, but it plays an essential structural role and its presence is essential for fluoride channel function. In terms of biological role, fluoride-specific ion channel. Important for reducing fluoride concentration in the cell, thus reducing its toxicity. The polypeptide is Fluoride-specific ion channel FluC (Shewanella amazonensis (strain ATCC BAA-1098 / SB2B)).